We begin with the raw amino-acid sequence, 876 residues long: Radial spoke head 10 homolog B (876 aa).

Residues 1-16 are compositionally biased toward basic and acidic residues; that stretch reads MVKEKKKADKKGDKSA. The segment at 1–71 is disordered; that stretch reads MVKEKKKADK…VQMEQSEEET (71 aa). Residues 17–37 are compositionally biased toward polar residues; sequence RSPSSISDNPEASKQDSNASK. Low complexity predominate over residues 39–50; sequence EVAPSAVVPVVE. MORN repeat units follow at residues 86–108, 109–129, 132–154, 155–172, 179–196, 204–225, 227–244, 251–268, 284–305, and 307–328; these read YEGE…GGNT, YHGM…WADG, YEGD…DGST, YEGE…MFKC, YIGH…SIYY, YEGD…KSGN, YEGQ…RMRW, YTGH…THTW, YIGE…ASGA, and YEGE…KNGH. Polar residues predominate over residues 356–372; the sequence is WSDASQRSRQPRGSSVS. The interval 356–386 is disordered; that stretch reads WSDASQRSRQPRGSSVSAVREPETLRKLDGS. Over residues 375–386 the composition is skewed to basic and acidic residues; it reads REPETLRKLDGS. The stretch at 790–832 forms a coiled coil; sequence LKEKVKENQLQEAELAQQRQIENEELEARLNILREEEARKQDF. The segment at 839 to 876 is disordered; it reads LKEPSEIPASQPLTPSPPKEDLASIQTSKASPGKKKKK.

As to quaternary structure, interacts with RSPH6A. Does not appear to be part of the axonemal radial spoke complexes 1 or 2. Expressed in ependymal cells (at protein level).

The protein localises to the cytoplasm. It is found in the cytoskeleton. The protein resides in the cilium axoneme. It localises to the cell projection. Its subcellular location is the cilium. The protein localises to the flagellum. In terms of biological role, may function as part of the axonemal radial spoke complex 3 (RS3). Radial spoke complexes are important for ciliary motility. In Mus musculus (Mouse), this protein is Radial spoke head 10 homolog B.